The primary structure comprises 360 residues: DNA replication and repair protein RecF (360 aa).

33–40 (GENGSGKT) contacts ATP.

This sequence belongs to the RecF family.

The protein resides in the cytoplasm. Functionally, the RecF protein is involved in DNA metabolism; it is required for DNA replication and normal SOS inducibility. RecF binds preferentially to single-stranded, linear DNA. It also seems to bind ATP. This Rickettsia canadensis (strain McKiel) protein is DNA replication and repair protein RecF.